Here is a 198-residue protein sequence, read N- to C-terminus: E3 ubiquitin-protein ligase rnf152 (198 aa).

The RING-type zinc-finger motif lies at Cys-12–Arg-55. A helical transmembrane segment spans residues Thr-162 to Leu-182.

The protein belongs to the RNF152 family.

The protein resides in the lysosome membrane. The catalysed reaction is S-ubiquitinyl-[E2 ubiquitin-conjugating enzyme]-L-cysteine + [acceptor protein]-L-lysine = [E2 ubiquitin-conjugating enzyme]-L-cysteine + N(6)-ubiquitinyl-[acceptor protein]-L-lysine.. The protein operates within protein modification; protein ubiquitination. In terms of biological role, E3 ubiquitin-protein ligase that acts as a negative regulator of mTORC1 signaling by mediating ubiquitination of RagA/RRAGA and RHEB. Catalyzes 'Lys-63'-linked polyubiquitination of RagA/RRAGA in response to amino acid starvation, thereby regulating mTORC1 signaling. Also mediates monoubiquitination of RHEB, promoting its association with the TSC-TBC complex and subsequent inhibition. Also mediates 'Lys-48'-linked polyubiquitination of target proteins and their subsequent targeting to the proteasome for degradation. The polypeptide is E3 ubiquitin-protein ligase rnf152 (Danio rerio (Zebrafish)).